The following is a 119-amino-acid chain: Large ribosomal subunit protein bL20 (119 aa).

It belongs to the bacterial ribosomal protein bL20 family.

In terms of biological role, binds directly to 23S ribosomal RNA and is necessary for the in vitro assembly process of the 50S ribosomal subunit. It is not involved in the protein synthesizing functions of that subunit. This Dehalococcoides mccartyi (strain ATCC BAA-2266 / KCTC 15142 / 195) (Dehalococcoides ethenogenes (strain 195)) protein is Large ribosomal subunit protein bL20.